A 365-amino-acid chain; its full sequence is Phospho-N-acetylmuramoyl-pentapeptide-transferase (365 aa).

A run of 9 helical transmembrane segments spans residues 47–67 (LLALGLGFSLAAIAGYWVVPL), 92–112 (PTMGGIFAIPAGLLPALILAG), 114–134 (SPLVWALAFVTLAYATIGWLD), 153–173 (LCLQFGAAFLFCLWLISQQGW), 180–200 (ITLPFGWSLALSLLFWPLAVF), 215–235 (LDGLAGGTGAAVLAGLGLWLA), 239–259 (PAIATFCCSLAGGFLGFLLHN), 281–301 (AIAIVANCLWVLLVMGGLFVL), and 344–364 (TQVVASFYGLTLLLIASCWLL).

The protein belongs to the glycosyltransferase 4 family. MraY subfamily. Mg(2+) is required as a cofactor.

It localises to the cell inner membrane. It carries out the reaction UDP-N-acetyl-alpha-D-muramoyl-L-alanyl-gamma-D-glutamyl-meso-2,6-diaminopimeloyl-D-alanyl-D-alanine + di-trans,octa-cis-undecaprenyl phosphate = di-trans,octa-cis-undecaprenyl diphospho-N-acetyl-alpha-D-muramoyl-L-alanyl-D-glutamyl-meso-2,6-diaminopimeloyl-D-alanyl-D-alanine + UMP. It participates in cell wall biogenesis; peptidoglycan biosynthesis. Catalyzes the initial step of the lipid cycle reactions in the biosynthesis of the cell wall peptidoglycan: transfers peptidoglycan precursor phospho-MurNAc-pentapeptide from UDP-MurNAc-pentapeptide onto the lipid carrier undecaprenyl phosphate, yielding undecaprenyl-pyrophosphoryl-MurNAc-pentapeptide, known as lipid I. The chain is Phospho-N-acetylmuramoyl-pentapeptide-transferase from Synechococcus elongatus (strain ATCC 33912 / PCC 7942 / FACHB-805) (Anacystis nidulans R2).